A 257-amino-acid polypeptide reads, in one-letter code: E3 ubiquitin-protein ligase RNF170 (257 aa).

Over 1 to 24 the chain is Lumenal; it reads MADNQEERPHFPLDEGSIIEGVSD. A helical membrane pass occupies residues 25-45; that stretch reads QVIVVVLLSFVAVGSLIYLLL. Residues 46–200 lie on the Cytoplasmic side of the membrane; sequence RNDEQNIHPE…GGLFWMFRIR (155 aa). The segment at 87–130 adopts an RING-type zinc-finger fold; the sequence is CPVCLQQATFPVETNCGHLFCGSCIIAYWRYGTWLGAINCPICR. Residues 201-221 form a helical membrane-spanning segment; the sequence is IVLCLLGALLYLVSPLDIIPE. Residue Ala222 is a topological domain, lumenal. Residues 223–243 traverse the membrane as a helical segment; that stretch reads LFGILGFLDDLFVLFLLLIYI. Residues 244-257 lie on the Cytoplasmic side of the membrane; the sequence is SIMYREVVTQRLYR.

The protein resides in the endoplasmic reticulum membrane. The enzyme catalyses S-ubiquitinyl-[E2 ubiquitin-conjugating enzyme]-L-cysteine + [acceptor protein]-L-lysine = [E2 ubiquitin-conjugating enzyme]-L-cysteine + N(6)-ubiquitinyl-[acceptor protein]-L-lysine.. It functions in the pathway protein modification; protein ubiquitination. In terms of biological role, E3 ubiquitin-protein ligase that plays an essential role in stimulus-induced inositol 1,4,5-trisphosphate receptor (ITPR) ubiquitination and degradation via the endoplasmic reticulum-associated degradation (ERAD) pathway. Also involved in ITPR turnover in resting cells. This chain is E3 ubiquitin-protein ligase RNF170 (rnf170), found in Xenopus laevis (African clawed frog).